A 187-amino-acid polypeptide reads, in one-letter code: Putative type I specificity subunit S.MpnORF289P N-terminus (187 aa).

The protein belongs to the type-I restriction system S methylase family. The methyltransferase is composed of M and S polypeptides.

Functionally, the N-terminal section of a specificity (S) subunit of a type I methyltransferase (MTase); this subunit dictates DNA sequence specificity. The single R subunit has multiple frameshifts and is probably not expressed. This is Putative type I specificity subunit S.MpnORF289P N-terminus from Mycoplasma pneumoniae (strain ATCC 29342 / M129 / Subtype 1) (Mycoplasmoides pneumoniae).